A 464-amino-acid polypeptide reads, in one-letter code: Ribosomal protein uS12 methylthiotransferase RimO (464 aa).

One can recognise an MTTase N-terminal domain in the interval 14–125; that stretch reads PTVAFAHLGC…IVEVLQRVEA (112 aa). 6 residues coordinate [4Fe-4S] cluster: Cys-23, Cys-59, Cys-88, Cys-163, Cys-167, and Cys-170. The Radical SAM core domain occupies 149–378; that stretch reads TTDQAVAFLK…MALQQPISAE (230 aa). In terms of domain architecture, TRAM spans 381–452; that stretch reads HSWVSRTVDV…VYDLSGRIVG (72 aa).

It belongs to the methylthiotransferase family. RimO subfamily. Requires [4Fe-4S] cluster as cofactor.

Its subcellular location is the cytoplasm. It catalyses the reaction L-aspartate(89)-[ribosomal protein uS12]-hydrogen + (sulfur carrier)-SH + AH2 + 2 S-adenosyl-L-methionine = 3-methylsulfanyl-L-aspartate(89)-[ribosomal protein uS12]-hydrogen + (sulfur carrier)-H + 5'-deoxyadenosine + L-methionine + A + S-adenosyl-L-homocysteine + 2 H(+). In terms of biological role, catalyzes the methylthiolation of an aspartic acid residue of ribosomal protein uS12. This is Ribosomal protein uS12 methylthiotransferase RimO from Parasynechococcus marenigrum (strain WH8102).